The primary structure comprises 172 residues: Large ribosomal subunit protein uL10 (172 aa).

Belongs to the universal ribosomal protein uL10 family. As to quaternary structure, part of the ribosomal stalk of the 50S ribosomal subunit. The N-terminus interacts with L11 and the large rRNA to form the base of the stalk. The C-terminus forms an elongated spine to which L12 dimers bind in a sequential fashion forming a multimeric L10(L12)X complex.

In terms of biological role, forms part of the ribosomal stalk, playing a central role in the interaction of the ribosome with GTP-bound translation factors. The polypeptide is Large ribosomal subunit protein uL10 (Nitrobacter winogradskyi (strain ATCC 25391 / DSM 10237 / CIP 104748 / NCIMB 11846 / Nb-255)).